The sequence spans 545 residues: Methionine--tRNA ligase (545 aa).

Positions 12–22 match the 'HIGH' region motif; that stretch reads PYANGSLHIGH. Residues Cys-143, Cys-146, Cys-156, and Cys-159 each contribute to the Zn(2+) site. The short motif at 329–333 is the 'KMSKS' region element; sequence KLSKS. Residue Lys-332 participates in ATP binding.

Belongs to the class-I aminoacyl-tRNA synthetase family. MetG type 1 subfamily. Monomer. Requires Zn(2+) as cofactor.

It localises to the cytoplasm. The enzyme catalyses tRNA(Met) + L-methionine + ATP = L-methionyl-tRNA(Met) + AMP + diphosphate. Its function is as follows. Is required not only for elongation of protein synthesis but also for the initiation of all mRNA translation through initiator tRNA(fMet) aminoacylation. This chain is Methionine--tRNA ligase (metG), found in Buchnera aphidicola subsp. Baizongia pistaciae (strain Bp).